Consider the following 876-residue polypeptide: MQEHYQPAAIEPAAQKKWDDARIFNVSEDASKPKYYCLSMFPYPSGKLHMGHVRNYTIGDVLSRFKLLNGFNVMQPMGWDAFGMPAENAAMKNNVAPAAWTYDNIEYMKTQLKSLGFAIDWARETATCKPEYYRWEQWLFTKLFEKGIVYRKNGTVNWDPVDQTVLANEQVIDGRGWRSGALIEKREIPMYYFKITDYAEELLNDLDKLEHWPEQVKTMQRNWIGKSRGMTVRFAVSDDSKQGLEGDYAKLLQVYTTRPDTLMGATYVAVAAEHPLAAAAAADKPELQAFIAECKAGSVAEADMATMEKKGVPTGRYVVNPLNGDKLEVWIANYVLWGYGDGAVMAVPAHDERDFEFAAKYNLPKKQVIAVGDNAFDANRWQEWYADKENGVLVNSGDLDGLDFQTAFDAVAAKLQSQGAGEPKTQYRLRDWGISRQRYWGCPIPIVHCEQCGDVPVPADQLPVVLPENVVPDGMGSPLAKMPEFYETACPCCGGAAKRETDTMDTFMESSWYFFRYMSPKFSDGMVDPAAAKYWGAVDQYIGGIEHAILHLLYARFFTKLMRDEGLVNVDEPFERLLTQGMVVCETYYRENDKGGKDWINPADVELTFDDKGRPISAVLKADGLPVVISGTEKMSKSKNNGVDPQELINAYGADTARLFMMFAAPPEQSLEWSDSGVEGAHRFLRRLWRTVYEYLKQGEAVKAFAGSQDGLSKELKDLRHKLHATTAKVSDDYGRRQQFNTAIAAVMELLNQYDKTDTGGEQGRAVAQEVLETAVRLLWPIVPHICETLWSELNGAKLWEAGWPTVDEAALVKSEIEVMVQVNGKLRGKITVAADASKADLEAAALATEGAVKFMEGKPAKKIIVVPGRLVNIVV.

A 'HIGH' region motif is present at residues 42-52; sequence PYPSGKLHMGH. The 'KMSKS' region motif lies at 634 to 638; the sequence is KMSKS. Residue lysine 637 participates in ATP binding.

Belongs to the class-I aminoacyl-tRNA synthetase family.

It localises to the cytoplasm. The catalysed reaction is tRNA(Leu) + L-leucine + ATP = L-leucyl-tRNA(Leu) + AMP + diphosphate. The protein is Leucine--tRNA ligase of Neisseria meningitidis serogroup C / serotype 2a (strain ATCC 700532 / DSM 15464 / FAM18).